A 428-amino-acid chain; its full sequence is Probable 4-methylmuconolactone transporter (428 aa).

Over 1-26 (MFAWYKAGSPQQKKTFWACYSGWALD) the chain is Cytoplasmic. The helical transmembrane segment at 27-47 (SFDMQMFSFLLPALTLTWGLT) threads the bilayer. Residues 48 to 50 (KAE) lie on the Periplasmic side of the membrane. The chain crosses the membrane as a helical span at residues 51–71 (VGVLGTVALVVTAIGGWGAGI). Residues 72 to 80 (LSDRYGRAR) lie on the Cytoplasmic side of the membrane. A helical membrane pass occupies residues 81–101 (ILVLAIIWFTLFGVLAGFAQS). Over 102–110 (YQQLLIART) the chain is Periplasmic. A helical transmembrane segment spans residues 111-131 (LQGLGFGGEWAVGAALMAEVI). Residues 132–145 (DSRHRGKAIGFVQS) lie on the Cytoplasmic side of the membrane. The helical transmembrane segment at 146–166 (GFALGWALAVVVATLLLAWLP) threads the bilayer. Residue K167 is a topological domain, periplasmic. Residues 168–188 (EMAWRVAFWSGIIPALIVLFI) form a helical membrane-spanning segment. The Cytoplasmic segment spans residues 189–227 (RRHVKDSSMFERARQSRAPRASLSSVFNRKYARTLALSS). The helical transmembrane segment at 228-248 (VLVIGLQAGCYAILVWLPSLL) threads the bilayer. Over 249-252 (NQRQ) the chain is Periplasmic. The helical transmembrane segment at 253-273 (VAAGSMIVTVFIMAFGSFCGF) threads the bilayer. Over 274–287 (AVTADLSDRIGRRP) the chain is Cytoplasmic. Residues 288–308 (TLILLSVCAWIVTVSYMLLPL) traverse the membrane as a helical segment. Residues 309-314 (NTTLTA) lie on the Periplasmic side of the membrane. Residues 315–335 (ILGFLVGFSAIGMFAALGPFL) traverse the membrane as a helical segment. Over 336–356 (SELFPTNVRTTCMGFAYNVGK) the chain is Cytoplasmic. A helical membrane pass occupies residues 357–371 (SIGAGSVVGVGVLST). Residues 372–377 (HIGLAN) are Periplasmic-facing. A helical transmembrane segment spans residues 378-398 (AMGTFCLVAYAFAVFGIMLLP). Topologically, residues 399-428 (ETRGIAIENIGEADAHSPAAPLAQPASARS) are cytoplasmic.

It belongs to the major facilitator superfamily. Sugar transporter (TC 2.A.1.1) family.

The protein resides in the cell inner membrane. Functionally, probable uptake of 4-methylmuconolactone. The chain is Probable 4-methylmuconolactone transporter from Cupriavidus pinatubonensis (strain JMP 134 / LMG 1197) (Cupriavidus necator (strain JMP 134)).